Reading from the N-terminus, the 430-residue chain is Glutamine synthetase leaf isozyme, chloroplastic (430 aa).

The transit peptide at 1 to 49 directs the protein to the chloroplast; it reads MAQILAPSTQWQMRITKTSPCATPITSKMWSSLVMKQTKKVAHSAKFRV. Positions 77–157 constitute a GS beta-grasp domain; that stretch reads IIAEYIWIGG…VVCDAYTPAG (81 aa). Residues 99-119 form a disordered region; the sequence is SKPVSHPSEVPKWNYDGSSTG. The GS catalytic domain occupies 161 to 430; it reads PTNKRHRAAE…LAAQKIALKV (270 aa).

The protein belongs to the glutamine synthetase family. Homooctamer.

It is found in the plastid. The protein resides in the chloroplast. It carries out the reaction L-glutamate + NH4(+) + ATP = L-glutamine + ADP + phosphate + H(+). Functionally, the light-modulated chloroplast enzyme, encoded by a nuclear gene and expressed primarily in leaves, is responsible for the reassimilation of the ammonia generated by photorespiration. The sequence is that of Glutamine synthetase leaf isozyme, chloroplastic (GS2) from Pisum sativum (Garden pea).